A 217-amino-acid polypeptide reads, in one-letter code: Translation initiation factor IF-3 (217 aa).

The segment at 185-217 (YNLPETETTRIREENREKQKEKENTSKEGNKDA) is disordered. The segment covering 191–217 (ETTRIREENREKQKEKENTSKEGNKDA) has biased composition (basic and acidic residues).

The protein belongs to the IF-3 family. As to quaternary structure, monomer.

The protein localises to the cytoplasm. Its function is as follows. IF-3 binds to the 30S ribosomal subunit and shifts the equilibrium between 70S ribosomes and their 50S and 30S subunits in favor of the free subunits, thus enhancing the availability of 30S subunits on which protein synthesis initiation begins. This Methylacidiphilum infernorum (isolate V4) (Methylokorus infernorum (strain V4)) protein is Translation initiation factor IF-3.